A 354-amino-acid chain; its full sequence is Methionine import ATP-binding protein MetN (354 aa).

The 243-residue stretch at 8 to 250 folds into the ABC transporter domain; sequence LDHIDITFRQ…PKEALTQEFI (243 aa). 42-49 is a binding site for ATP; the sequence is GYSGAGKS.

This sequence belongs to the ABC transporter superfamily. Methionine importer (TC 3.A.1.24) family. The complex is composed of two ATP-binding proteins (MetN), two transmembrane proteins (MetI) and a solute-binding protein (MetQ).

The protein resides in the cell membrane. The catalysed reaction is L-methionine(out) + ATP + H2O = L-methionine(in) + ADP + phosphate + H(+). It carries out the reaction D-methionine(out) + ATP + H2O = D-methionine(in) + ADP + phosphate + H(+). Its function is as follows. Part of the ABC transporter complex MetNIQ involved in methionine import. Responsible for energy coupling to the transport system. This Streptococcus pyogenes serotype M2 (strain MGAS10270) protein is Methionine import ATP-binding protein MetN.